The primary structure comprises 334 residues: Anthranilate phosphoribosyltransferase (334 aa).

5-phospho-alpha-D-ribose 1-diphosphate-binding positions include Gly79, 82-83 (GD), Ser87, 89-92 (NIST), 107-115 (KHGNRSISS), and Ser119. Gly79 lines the anthranilate pocket. Ser91 is a Mg(2+) binding site. Anthranilate is bound at residue Asn110. Anthranilate is bound at residue Arg165. The Mg(2+) site is built by Asp224 and Glu225.

It belongs to the anthranilate phosphoribosyltransferase family. As to quaternary structure, homodimer. Mg(2+) is required as a cofactor.

The enzyme catalyses N-(5-phospho-beta-D-ribosyl)anthranilate + diphosphate = 5-phospho-alpha-D-ribose 1-diphosphate + anthranilate. Its pathway is amino-acid biosynthesis; L-tryptophan biosynthesis; L-tryptophan from chorismate: step 2/5. In terms of biological role, catalyzes the transfer of the phosphoribosyl group of 5-phosphorylribose-1-pyrophosphate (PRPP) to anthranilate to yield N-(5'-phosphoribosyl)-anthranilate (PRA). This Streptococcus pneumoniae (strain ATCC 700669 / Spain 23F-1) protein is Anthranilate phosphoribosyltransferase.